Consider the following 227-residue polypeptide: MAYPLQMGLQDATSPIMEELLHFHDHTLMIVFLISSLVLYIISLMLTTKLTHTSTMDAQEVETVWTILPAIILILIALPSLRILYMMDEINNPSLTVKTMGHQWYWSYEYTDYEDLNFDSYMIPTQELKPGELRLLEVDNRVVLPMEMTIRMLISSEDVLHSWAVPSLGLKTDAIPGRLNQTTLMTMRPGLYYGQCSEICGSNHSFMPIVLELVPLSHFEKWSTSML.

Residues 1–14 (MAYPLQMGLQDATS) are Mitochondrial intermembrane-facing. A helical membrane pass occupies residues 15–45 (PIMEELLHFHDHTLMIVFLISSLVLYIISLM). The Mitochondrial matrix segment spans residues 46–59 (LTTKLTHTSTMDAQ). The helical transmembrane segment at 60-87 (EVETVWTILPAIILILIALPSLRILYMM) threads the bilayer. The Mitochondrial intermembrane portion of the chain corresponds to 88–227 (DEINNPSLTV…HFEKWSTSML (140 aa)). Residues His-161, Cys-196, Glu-198, Cys-200, His-204, and Met-207 each contribute to the Cu cation site. Residue Glu-198 participates in Mg(2+) binding.

This sequence belongs to the cytochrome c oxidase subunit 2 family. Component of the cytochrome c oxidase (complex IV, CIV), a multisubunit enzyme composed of 14 subunits. The complex is composed of a catalytic core of 3 subunits MT-CO1, MT-CO2 and MT-CO3, encoded in the mitochondrial DNA, and 11 supernumerary subunits COX4I, COX5A, COX5B, COX6A, COX6B, COX6C, COX7A, COX7B, COX7C, COX8 and NDUFA4, which are encoded in the nuclear genome. The complex exists as a monomer or a dimer and forms supercomplexes (SCs) in the inner mitochondrial membrane with NADH-ubiquinone oxidoreductase (complex I, CI) and ubiquinol-cytochrome c oxidoreductase (cytochrome b-c1 complex, complex III, CIII), resulting in different assemblies (supercomplex SCI(1)III(2)IV(1) and megacomplex MCI(2)III(2)IV(2)). Found in a complex with TMEM177, COA6, COX18, COX20, SCO1 and SCO2. Interacts with TMEM177 in a COX20-dependent manner. Interacts with COX20. Interacts with COX16. It depends on Cu cation as a cofactor.

The protein resides in the mitochondrion inner membrane. It carries out the reaction 4 Fe(II)-[cytochrome c] + O2 + 8 H(+)(in) = 4 Fe(III)-[cytochrome c] + 2 H2O + 4 H(+)(out). In terms of biological role, component of the cytochrome c oxidase, the last enzyme in the mitochondrial electron transport chain which drives oxidative phosphorylation. The respiratory chain contains 3 multisubunit complexes succinate dehydrogenase (complex II, CII), ubiquinol-cytochrome c oxidoreductase (cytochrome b-c1 complex, complex III, CIII) and cytochrome c oxidase (complex IV, CIV), that cooperate to transfer electrons derived from NADH and succinate to molecular oxygen, creating an electrochemical gradient over the inner membrane that drives transmembrane transport and the ATP synthase. Cytochrome c oxidase is the component of the respiratory chain that catalyzes the reduction of oxygen to water. Electrons originating from reduced cytochrome c in the intermembrane space (IMS) are transferred via the dinuclear copper A center (CU(A)) of subunit 2 and heme A of subunit 1 to the active site in subunit 1, a binuclear center (BNC) formed by heme A3 and copper B (CU(B)). The BNC reduces molecular oxygen to 2 water molecules using 4 electrons from cytochrome c in the IMS and 4 protons from the mitochondrial matrix. The sequence is that of Cytochrome c oxidase subunit 2 (MT-CO2) from Phoca vitulina (Harbor seal).